The sequence spans 738 residues: Protostadienol synthase A (738 aa).

Residues 132-173 (KQEMCRYLLNVVNEDGGWGLFIQSPSTVFGTVMNYCMLRILG) form a PFTB 1 repeat. Catalysis depends on Asp463, which acts as the Proton donor. PFTB repeat units follow at residues 490 to 531 (LQQA…YENV), 567 to 607 (VSRS…ACMG), and 616 to 663 (CQRA…AVIG).

The protein belongs to the terpene cyclase/mutase family.

It carries out the reaction (S)-2,3-epoxysqualene = (17Z)-protosta-17(20),24-dien-3beta-ol. In terms of biological role, protostadienol synthase which cyclizes (3S)-oxidosqualene to (17Z)-protosta-17(20),24-dien-3-beta-ol (protostadienol), the biosynthetic precursor of helvolic acid, a secondary metabolite which promotes virulence. This chain is Protostadienol synthase A (pdsA), found in Neosartorya fischeri (strain ATCC 1020 / DSM 3700 / CBS 544.65 / FGSC A1164 / JCM 1740 / NRRL 181 / WB 181) (Aspergillus fischerianus).